The primary structure comprises 132 residues: ATP synthase epsilon chain, chloroplastic (132 aa).

It belongs to the ATPase epsilon chain family. As to quaternary structure, F-type ATPases have 2 components, CF(1) - the catalytic core - and CF(0) - the membrane proton channel. CF(1) has five subunits: alpha(3), beta(3), gamma(1), delta(1), epsilon(1). CF(0) has three main subunits: a, b and c.

The protein localises to the plastid. The protein resides in the chloroplast thylakoid membrane. In terms of biological role, produces ATP from ADP in the presence of a proton gradient across the membrane. This chain is ATP synthase epsilon chain, chloroplastic, found in Coffea arabica (Arabian coffee).